The sequence spans 316 residues: Biotin synthase (316 aa).

Residues 42-268 (LCGESVDLCT…INPTAYIRMA (227 aa)) form the Radical SAM core domain. [4Fe-4S] cluster is bound by residues cysteine 60, cysteine 64, and cysteine 67. The [2Fe-2S] cluster site is built by serine 104, cysteine 136, cysteine 196, and arginine 266.

Belongs to the radical SAM superfamily. Biotin synthase family. As to quaternary structure, homodimer. [4Fe-4S] cluster is required as a cofactor. [2Fe-2S] cluster serves as cofactor.

The catalysed reaction is (4R,5S)-dethiobiotin + (sulfur carrier)-SH + 2 reduced [2Fe-2S]-[ferredoxin] + 2 S-adenosyl-L-methionine = (sulfur carrier)-H + biotin + 2 5'-deoxyadenosine + 2 L-methionine + 2 oxidized [2Fe-2S]-[ferredoxin]. It participates in cofactor biosynthesis; biotin biosynthesis; biotin from 7,8-diaminononanoate: step 2/2. Catalyzes the conversion of dethiobiotin (DTB) to biotin by the insertion of a sulfur atom into dethiobiotin via a radical-based mechanism. In Clostridium beijerinckii (strain ATCC 51743 / NCIMB 8052) (Clostridium acetobutylicum), this protein is Biotin synthase.